The primary structure comprises 133 residues: MTTWILDKSAHVRLVAGATPPAGIDLTDLAICDIGELEWLYSARSATDYDSQQTSLRAYQILRAPSDIFDRVRHLQRDLAHHRGMWHRTPLPDLFIAETALHHRAGVLHHDRDYKRIAVVRPGFQACELSRGR.

Positions 7 and 93 each coordinate Mg(2+). Residues 30–118 (AICDIGELEW…HHDRDYKRIA (89 aa)) enclose the PINc domain.

This sequence belongs to the PINc/VapC protein family. Mg(2+) serves as cofactor.

Toxic component of a type II toxin-antitoxin (TA) system. An RNase. The cognate antitoxin is VapB17. In Mycobacterium tuberculosis (strain CDC 1551 / Oshkosh), this protein is Ribonuclease VapC17.